The sequence spans 729 residues: ATP-dependent DNA helicase Hel308 (729 aa).

Residues glutamine 28 and 46 to 53 contribute to the ATP site; that span reads IPTASGKT. The region spanning 33–199 is the Helicase ATP-binding domain; that stretch reads EKGLLEGRNL…WLEAELVVSE (167 aa). Positions 144 to 147 match the DEAH box motif; the sequence is DEVH. Residues 232–426 enclose the Helicase C-terminal domain; that stretch reads AVNLALDTLK…SKLGTENALR (195 aa). The disordered stretch occupies residues 706–729; it reads SSGIIASEPPEKSPYSGQKTISDY. A compositionally biased stretch (polar residues) spans 720–729; sequence YSGQKTISDY.

Belongs to the helicase family. Hel308 subfamily. As to quaternary structure, monomer.

The enzyme catalyses Couples ATP hydrolysis with the unwinding of duplex DNA by translocating in the 3'-5' direction.. The catalysed reaction is ATP + H2O = ADP + phosphate + H(+). Its function is as follows. DNA-dependent ATPase and 3'-5' DNA helicase that may be involved in repair of stalled replication forks. The sequence is that of ATP-dependent DNA helicase Hel308 from Methanosarcina barkeri (strain Fusaro / DSM 804).